Reading from the N-terminus, the 444-residue chain is 4-O-dimethylallyl-L-tyrosine synthase (444 aa).

The protein belongs to the tryptophan dimethylallyltransferase family. As to quaternary structure, homodimer.

It carries out the reaction L-tyrosine + dimethylallyl diphosphate = 4-O-dimethylallyl-L-tyrosine + diphosphate. In terms of biological role, 4-O-dimethylallyl-L-tyrosine synthase; part of the gene cluster that mediates the biosynthesis of an unusual class of epipolythiodioxopiperazines (ETPs) lacking the reactive thiol group important for toxicity. Firstly, L-tyrosine is prenylated by tcpD, before undergoing condensation with L-glycine in a reaction catalyzed by the NRPS tcpP leading to the diketopiperazine (DKP) backbone. Afterwards the alpha-carbon of tyrosine is oxidized by the cytochrome P450 tcpC to form a hydroxyl group. However, in contrast other ETP biosynthesis pathways studied so far, tcpC is not able to bishydroxylate the DKP at both alpha-carbon positions, but hydroxylates the alpha-carbon of the tyrosine part and the nitrogen of the glycine part. The next steps involve an alpha,beta-elimination reaction catalyzed by tcpI, a methylation by the methyltransferase tcpN the action of the four enzyme cascade tcpG/K/J/I. Due to a dysfunctional cytochrome P450 monooxygenase tcpC, the pathway leads to the biosynthesis of probable non-toxic metabolites lacking the reactive thiol group. This Claviceps purpurea (strain 20.1) (Ergot fungus) protein is 4-O-dimethylallyl-L-tyrosine synthase.